The following is a 3948-amino-acid chain: MDASEPIAVIGSACRFPGGSDSPSKLWELLKEPRDLLSKVPPERYNADAFYHADATHHGTANVRHSYFLSEDPSSFDNNFFNIQPGEAEAIDPQQRLLMEVVYQGLCSAGQTIEGLRGSPTAVYVGVMCDDWSGIITRDLEVFPRYGATGMARSIMSNRISYFFDWHGPSMTIDTACSSSLVAVHQAIQTLRSGESEVAIAAGANLILTPGMYVAESKLSMLSPSGRSKMWDQDVDGYARGEGIAAVVLKPLSAAIRDNDHIDCIIRATGVNQDGRTPGLTMPSATAQADLIRSTYARAGLDINKAEDRPQFFHAHGTGTPAGDPREAEAISRAFYSPDNLSKDDKLYVGSIKTIIGHTEGTAGLASLIGTSLAIQSKVIPPNMHLDVLNPKVAPFYNNLEVPTSALEWPETRSGQPRRASINSFGFGGTNAHAIIEAYEPNAAARASGTLFSPLTFSASSEPSLRFLLMSYSEHLKLNPQIPLKDLAYSLQTRRSTLAYRVAITATTAENASKQLDAIVDGEQSSSINTRQLSKSSPKILGIFTGQGTQWPRMGARLLEESPFASKRLAELDDALSSLPADDRPTWTLREMILANADRSRVAEAAISQPLCTAVQVVLVDLLSQAGIQLSAVVGHSSGEIGAAYAAGLLTARDAIRVAYYRGLYAKLAQSPNGHKGAMMAVGTTFGDAADFCELEAFQGRIQIAAKNSPSSITLSGDKDAIIEAIEIFKDEGKFARQLKVDTAYHSSHVIPCAQPYLEAMNKCGIETATATKTQWYSSVHGGQIMHADSLTTSYWVDNMTSAVLFSPAVAQAWEEGGPYDLAIEVGPHPALKTPALDTIEAISEGRPPYTGVIARGKDDVQQFSTALGFIWTHLGPGSVAFEKFESVVSGSKDRPSFIQDLPNYPFDHAKQFMSMSRVSGWFNSIQEAPHPLLGRRCHDRETSHSVQWRNVLSHKEIPWLQGHQLQGQIIFPATGYISMAVEAIKILAEPSSLGLITIEDLNITRALAFVDEDASVETLFELRILSRSENEINAEFCCYSGIPHTHTATMSLNATAQIKASLGAPTSDKLSKTAVNDFDLRPVSVDRFYDFLARLGYNYSWPFRGTTSIRRKANFATGTLEDQSGSNWEDQLMVHPGMLDSSLQTTFAAFCCPGDERLWALHLPTSFRSITINPYFTSAGIGKQNSFTYQSVAIEERKASKVLVELNLLSEEAGDTFLQIEGMELVPFSPATPANDAVLFSRFDYRLAGPDGELTAAEYSFKPEDYKMALDCERIAFYYLRRLVETITPEERANTLLHYRHLVDWAAYVVPQVSNGGNPHIPASAQNDTHDDIQQLLKKHYERVDIRLLESVGENLPQVIRDSGNILEHMTKDGMLQDVYEQGFGLNLVNQYIAHMTAQIAHRYPRMNILEIGAGTGGSTREILPRLGSAFSTYTYTDVSGGFFDMAQDRFKDCADRMIFKTFDMNISPASQGFTEGAYDLVIASNVLHATLELEDMMKHVRSFLKPGGFLIILETVNNDCLRVGLPMGSLPGWWLGAEHGRQWGPTLTLPQWDSLLSKCGFGGIDTTTPPVHKILPGHVFCAQALDERIEILRSPMDHLATLPETKSTQLAIIGGQTLKVHRMCDQISRRLSSRYTSISRFHSIEEINETGLPESCTVLSLTELDEPLFTNMTSGKLDALKILWKQGGCILWITSGSRAENPHSYMTTGVGRCMRFEYPNITLQALDIKQISDRCPELIVDHLLRLEILDKWSKELRSDELLWSLEPEIYIEEDTTIIPRLYPYEAGNARYNAERRKVIKQADTKTDRVIFAECEGKWEIQHASPLHVARELPFSSDVSTRTIRITHLSPAIVNIVPGVSVMACAGVDTASNEPVIAVTHIAESPVSIPTGWCIHLDKLDPVKTLTAVSAVLIASSILERLAKGETLVVHDTPPHVRVALDKLAKTASVAIFYTSSDEAMSKLGARYIDRRSPLRVIKASLPKSASKFIDLSQDSDKNETSKVISMCLPWDYETIDTAHLFGLRNVAQQSAFEKDVSSSLKKAFEAFNSQLNTTASTNSVSLKETSNPIVDQVRFAILDCTDTPIQASVHPIDDGRIFRADKTFLLVGLTGELGQSLCKWMVEQGARNIVLTSRRPNVSEHFLDSFTETGATVKALPMDATNRSSIEACLETIKKTSPPIAGVVNGAMVLRDALFENMPYEDFIKVLNPKVLGSQLLDEMFYDTPLDFFIFFSSTTAVMGNSGQSNYIAGNMYMNALAAQRKKRGVAASSIDISSIIGLGYVERAEDLSEDTFIKMGYKPMSEQDLQKLFAEAIVLGRPDCHEVCELVTGVTPIYTDAQASDQYLKDVKFGHFLMERLDTQAYTGKTSTVPVRVQLADVKIRADAVAIIKESFIVRLRRVLAVGPDEVINEKVTLVEQGVDSLMAVEVRSWFIKELDVDIPVLKILGGMSVPDLVDECLDLLSPSILDVSSLEAGNAQAAKPTTVIPQTPTRVTPPESSQGTSDQDKPYTGSDSSHSPIGTPLTSWDRQDSSPPDKSDDAPNSTDILAPPRTFPNELSSIMSYGQAGFWFLNDYLVNKKAFNMAVMLKLTGPIRTQPLEKAVKLVAERHEILRTRFFWSEDGDERTPMQGINPPEMKLTVKTIADEEEAETELEHLHEENWELSSGEGVKVILLRLSDQVHFLLSGMHHIYLDGYSFSVFFKDLESAYINHRLPPLPVESQYRTFALQQRKAYEDGDLLKSIEYYRQNFPQEFAPIRPFPFASTGSRQLANEYSQHEAKLSIAPDVSAKIRQLARANRSTSFHVYLAALKILLFSLLPDAEELFIGIADANRGDKKFMGSLGFFLNVLPLRFQRGKPRSRVSSAIQSARDAVYGALQHSHLPFDVLLRELNVPRSDKHTPIFQVFMDYRQVVQERSSWGGCKLSDEKWCNAGTGYDIALEVTENINTDTLLSLRLQKQLYSEEHTQVLLRSYLNVLEYMIRGSDKTVDAAPAWSDHDLQVAVDAGKAPDYESKWQPTVSHQIDQVIQDNPDNIALKDGNGNVLTYVQMGNRIDAISKALIDAGTVQGTVVGVFQEPSTDWICSLLAIFKAGAVYVPLDLRNSIPRLASIVKASRPSVIITDSTTDEKVESIGAKFVTKLQLDGLNPMIHHDSIEINHAKAGYLAVILFTSGSTGEPKGLMMTHTNLLAYAEVSSKTFARADEDLVVLQQSPFSFDFSLDQTMAALTNGGCLYVVPASKRGDPDEISKIMVEESVTYTTATPSEYDLWLRYSAETLRQCTSWKYAFSGGEAMSYKLAREFGTLKLRNLHVFNGYGPAETTILSHRIDLKYTDPDLPDPLPAGYPLPGFAVCIVDNKMRPVPPGVQGEIVLGGPCIVSGYLNMPESTRDKFLPDTFFGTSGTVYRSGDRGRLCQDGLLFCDGRLEGNRMIKLRGFRVELDEVEKTIVSHSAGALSHAVVTVRGAEEGRYLVAHVVFAPDFPEKDREGTMRSLRQTLPLPPYMRPSAFQVLTDIPRTAHLKIDRKAIQDIPVQTTQSEVSEILTPSEQRLSELWRRVLPLDPGTLTHESDFFLIGGNSILLVKLQTLLRQVSWTAPKLVTLMGSSTLGAMAGVLEDCGPVNIIHWDEETKFPQDLQLTTPLRAAGKSTDITVLLTGSSGYLGRHLLSSLLNDHRVAQVHCLCRNLNDHQVVENPSSKVRVLQSDLAQHKLGLPDSTYSQLATEVDVIIHCAANRSFWDRYEALKADNLESTKELVKLVVSSGRAIPLHFLSSGAVIKYNSGLAPPADGGDGYVATKWASEAFLRQAVDSINLPVFSHRPVACESVQQSEEEDISILNELIQIVKLLGCRPSFDGVGGFVDVMPVNEVVEAIHKTGLNSQTEEGFCILEHKAHQRAYVKSFAAAVESDSDLSKIPCIPILEWFGRTKKAGFSYFLASQDLILGSQLFSRR.

In terms of domain architecture, Ketosynthase family 3 (KS3) spans 4 to 438; the sequence is SEPIAVIGSA…GTNAHAIIEA (435 aa). Active-site for beta-ketoacyl synthase activity residues include C177, H316, and H358. A malonyl-CoA:ACP transacylase (MAT) domain region spans residues 543-847; it reads IFTGQGTQWP…DTIEAISEGR (305 aa). The N-terminal hotdog fold stretch occupies residues 931–1066; the sequence is HPLLGRRCHD…AQIKASLGAP (136 aa). Positions 931 to 1233 are dehydratase (DH) domain; the sequence is HPLLGRRCHD…MELVPFSPAT (303 aa). The PKS/mFAS DH domain occupies 931–1235; that stretch reads HPLLGRRCHD…LVPFSPATPA (305 aa). The active-site Proton acceptor; for dehydratase activity is H964. Positions 1081 to 1235 are C-terminal hotdog fold; that stretch reads LRPVSVDRFY…LVPFSPATPA (155 aa). D1141 functions as the Proton donor; for dehydratase activity in the catalytic mechanism. A methyltransferase (MT) domain region spans residues 1376-1574; sequence MLQDVYEQGF…GIDTTTPPVH (199 aa). The tract at residues 2105 to 2277 is ketoreductase (KR) domain; that stretch reads TFLLVGLTGE…VAASSIDISS (173 aa). A Carrier 1 domain is found at 2389 to 2464; it reads AIIKESFIVR…DLVDECLDLL (76 aa). Residue S2424 is modified to O-(pantetheine 4'-phosphoryl)serine. The disordered stretch occupies residues 2480 to 2553; it reads QAAKPTTVIP…NSTDILAPPR (74 aa). 2 stretches are compositionally biased toward polar residues: residues 2487–2505 and 2513–2528; these read VIPQTPTRVTPPESSQGTS and GSDSSHSPIGTPLTSW. Positions 2529–2541 are enriched in basic and acidic residues; sequence DRQDSSPPDKSDD. The interval 2564–2991 is condensation (C) domain; sequence SYGQAGFWFL…IRGSDKTVDA (428 aa). The interval 3026 to 3424 is adenylation (A) (KR) domain; sequence QVIQDNPDNI…DGLLFCDGRL (399 aa). A Carrier 2 domain is found at 3540-3617; sequence EILTPSEQRL…AMAGVLEDCG (78 aa). S3577 carries the post-translational modification O-(pantetheine 4'-phosphoryl)serine. Residues 3653 to 3870 are reductase (RED) domain; that stretch reads LTGSSGYLGR…MPVNEVVEAI (218 aa).

This sequence in the C-terminal section; belongs to the NRP synthetase family.

It carries out the reaction L-serine + 7 malonyl-CoA + acetyl-CoA + 2 S-adenosyl-L-methionine + ATP + 8 NADPH + 11 H(+) = (5S)-3-[(2E,6R,8E,10E,12E)-2,6-dimethyltetradeca-2,8,10,12-tetraenoyl]-5-(hydroxymethyl)pyrrolidine-2,4-dione + AMP + 2 S-adenosyl-L-homocysteine + 7 CO2 + diphosphate + 8 NADP(+) + 8 CoA + 6 H2O. Its pathway is mycotoxin biosynthesis. Functionally, hybrid PKS-NRPS synthetase; part of the gene cluster that mediates the biosynthesis of equisetin, a trans-fused decalin-containing tetramic acid with antimicrobial activity. The PKS module of eqxS together with the enoylreductase eqxC catalyze the formation of the polyketide unit which is then conjugated to L-serine by the condensation domain of the eqxS NRPS module. Activity of the Dieckmann cyclase domain (RED) results in release of the Dieckmann product intermediate. Diels-Alderase eqx3 is involved in endo-selective Diels-Alder cycloaddition to form the decalin ring, leading to the production of N-desmethylequisetin also called trichosetin. Subsequent N-methylation is carried out by eqxD to give equisetin. This is Equisetin synthetase eqxS from Fusarium heterosporum.